Reading from the N-terminus, the 473-residue chain is Lysophospholipid acyltransferase 5 (473 aa).

4 consecutive transmembrane segments (helical) span residues 20-40 (LLISVLAGYPLAVVHRTFFYN), 43-63 (AQHQHLFFVIVGLSLWMFNCG), 66-86 (VIHPILSIFGAFFITNFMAGT), and 88-108 (ASIYAAHIVFLGHLLIGYWFH). Active-site residues include asparagine 315 and histidine 351. Helical transmembrane passes span 341 to 361 (VITLSYLAIWHGYHLGYFLLF), 396 to 416 (FIWIFGKLTISYSMGFAFLMF), and 431 to 451 (LYFIGFIIYFIVWPILHMVLL). The Di-lysine motif signature appears at 470–473 (KKEL).

It belongs to the membrane-bound acyltransferase family.

The protein resides in the endoplasmic reticulum membrane. It catalyses the reaction a 1-acyl-sn-glycero-3-phosphocholine + an acyl-CoA = a 1,2-diacyl-sn-glycero-3-phosphocholine + CoA. The catalysed reaction is a 1-acyl-sn-glycero-3-phospho-L-serine + an acyl-CoA = a 1,2-diacyl-sn-glycero-3-phospho-L-serine + CoA. It carries out the reaction a 1-acyl-sn-glycero-3-phosphoethanolamine + an acyl-CoA = a 1,2-diacyl-sn-glycero-3-phosphoethanolamine + CoA. It functions in the pathway lipid metabolism; phospholipid metabolism. Functionally, probable acyltransferase which may mediate the conversion of lysophosphatidylcholine (1-acyl-sn-glycero-3-phosphocholine or LPC) into phosphatidylcholine (1,2-diacyl-sn-glycero-3-phosphocholine or PC) (LPCAT activity). May also catalyze the conversion of lysophosphatidylethanolamine (1-acyl-2-hydroxy-sn-glycero-3-phosphoethanolamine or LPE) into phosphatidylethanolamine (1,2-diacyl-sn-glycero-3-phosphoethanolamine or PE) (LPEAT activity), as well as the conversion of lysophosphatidylserine (1-acyl-2-hydroxy-sn-glycero-3-phospho-L-serine or LPS) into phosphatidylserine (1,2-diacyl-sn-glycero-3-phospho-L-serine or PS) (LPSAT activity). Required for incorporation of arachidonic acid into PC, PE, and PS. The sequence is that of Lysophospholipid acyltransferase 5 (mboa-6) from Caenorhabditis elegans.